The primary structure comprises 440 residues: 26S proteasome regulatory subunit 4 (440 aa).

Gly residues predominate over residues methionine 1–glycine 13. A disordered region spans residues methionine 1–leucine 49. A lipid anchor (N-myristoyl glycine) is attached at glycine 2. At serine 4 the chain carries Phosphoserine. Residues glycine 14 to glutamate 26 are compositionally biased toward basic and acidic residues. Threonine 53 is modified (phosphothreonine). The segment at glutamine 84–glycine 104 is disordered. Residues lysine 86–arginine 103 are compositionally biased toward basic and acidic residues. Glycine 226–threonine 233 provides a ligand contact to ATP. A Glycyl lysine isopeptide (Lys-Gly) (interchain with G-Cter in ubiquitin) cross-link involves residue lysine 237. Residue lysine 258 is modified to N6-acetyllysine. Residue threonine 434 is modified to Phosphothreonine. Tyrosine 439 carries the post-translational modification Phosphotyrosine.

The protein belongs to the AAA ATPase family. In terms of assembly, component of the 19S proteasome regulatory particle complex. The 26S proteasome consists of a 20S core particle (CP) and two 19S regulatory subunits (RP). The regulatory particle is made of a lid composed of 9 subunits, a base containing 6 ATPases including PSMC1 and few additional components. Interacts with SCA7. Interacts with NGLY1. Interacts with PAAF1.

It localises to the cytoplasm. Its subcellular location is the nucleus. It is found in the membrane. Functionally, component of the 26S proteasome, a multiprotein complex involved in the ATP-dependent degradation of ubiquitinated proteins. This complex plays a key role in the maintenance of protein homeostasis by removing misfolded or damaged proteins, which could impair cellular functions, and by removing proteins whose functions are no longer required. Therefore, the proteasome participates in numerous cellular processes, including cell cycle progression, apoptosis, or DNA damage repair. PSMC1 belongs to the heterohexameric ring of AAA (ATPases associated with diverse cellular activities) proteins that unfolds ubiquitinated target proteins that are concurrently translocated into a proteolytic chamber and degraded into peptides. The polypeptide is 26S proteasome regulatory subunit 4 (PSMC1) (Homo sapiens (Human)).